The following is a 438-amino-acid chain: Coenzyme A disulfide reductase (438 aa).

8 to 33 (GAVAGGATCASQIRRLDKESDIIIFE) is a binding site for FAD. Positions 15, 19, 22, 39, and 42 each coordinate substrate. Cys-43 functions as the Nucleophile in the catalytic mechanism. Residue Cys-43 is the Redox-active of the active site. Position 71 (Lys-71) interacts with substrate. 151–166 (VLVVGAGYVSLEVLEN) serves as a coordination point for NADP(+). Position 267–277 (267–277 (TNVPNIYAIGD)) interacts with FAD. His-299 serves as a coordination point for substrate. Tyr-419 provides a ligand contact to FAD. Residue Lys-427 participates in substrate binding.

The protein belongs to the class-III pyridine nucleotide-disulfide oxidoreductase family. Homodimer. Requires FAD as cofactor.

It catalyses the reaction NADP(+) + 2 CoA = CoA-disulfide + NADPH + H(+). Functionally, catalyzes specifically the NADPH-dependent reduction of coenzyme A disulfide. The sequence is that of Coenzyme A disulfide reductase from Staphylococcus aureus (strain MSSA476).